We begin with the raw amino-acid sequence, 715 residues long: Palmitoyltransferase ZDHHC5 (715 aa).

The Cytoplasmic portion of the chain corresponds to 1–13 (MPAESGKRFKPSK). A helical membrane pass occupies residues 14–34 (YVPVSAAAIFLVGATTLFFAF). Topologically, residues 35–38 (TCPG) are extracellular. A helical membrane pass occupies residues 39–59 (LSLYVSPAVPIYNAIMFLFVL). Over 60–148 (ANFSMATFMD…NCIGRRNYRY (89 aa)) the chain is Cytoplasmic. Phosphotyrosine is present on Tyr-91. The DHHC domain occupies 104 to 154 (KWCATCRFYRPPRCSHCSVCDNCVEEFDHHCPWVNNCIGRRNYRYFFLFLL). Residue Cys-134 is the S-palmitoyl cysteine intermediate of the active site. Residues 149-169 (FFLFLLSLTAHIMGVFGFGLL) form a helical membrane-spanning segment. The Extracellular segment spans residues 170–191 (YVLYHIEELSGVRTAVTMAVMC). The helical transmembrane segment at 192-212 (VAGLFFIPVAGLTGFHVVLVA) threads the bilayer. Residues 213–715 (RGRTTNEQVT…VGGTTYEISV (503 aa)) lie on the Cytoplasmic side of the membrane. Ser-247 is modified (phosphoserine). The disordered stretch occupies residues 289–715 (GELRRTKSKG…VGGTTYEISV (427 aa)). Position 294 is a phosphothreonine (Thr-294). Ser-296 and Ser-299 each carry phosphoserine. Phosphothreonine is present on Thr-303. Ser-345 is subject to Phosphoserine. Thr-348 and Thr-350 each carry phosphothreonine. Residues 359-373 (SSSSTSAAMPHSSSA) show a composition bias toward low complexity. Phosphoserine is present on residues Ser-380, Ser-398, Ser-406, and Ser-409. Thr-411 carries the post-translational modification Phosphothreonine. Phosphoserine is present on residues Ser-415, Ser-425, Ser-429, and Ser-432. Low complexity predominate over residues 422–432 (SSGSRSSSLKS). A Phosphothreonine modification is found at Thr-436. Positions 442 to 478 (QLQSIRSEGTTSTSYKSLANQTRNGSLSYDSLLTPSD) are enriched in polar residues. 2 positions are modified to phosphoserine: Ser-529 and Ser-554. Residue Arg-617 is modified to Omega-N-methylarginine. Ser-621 is subject to Phosphoserine. Thr-659 is subject to Phosphothreonine. Positions 666 to 677 (LKTTYSKSNGQP) are enriched in polar residues. Phosphoserine is present on residues Ser-684 and Ser-694. At Arg-697 the chain carries Omega-N-methylarginine.

It belongs to the DHHC palmitoyltransferase family. ERF2/ZDHHC9 subfamily.

The protein localises to the cell membrane. It catalyses the reaction L-cysteinyl-[protein] + hexadecanoyl-CoA = S-hexadecanoyl-L-cysteinyl-[protein] + CoA. Palmitoyltransferase that catalyzes the addition of palmitate onto various protein substrates such as CTNND2, CD36, GSDMD, NLRP3, NOD1, NOD2, STAT3 and S1PR1 thus plays a role in various biological processes including cell adhesion, inflammation, fatty acid uptake, bacterial sensing or cardiac functions. Plays an important role in the regulation of synapse efficacy by mediating palmitoylation of delta-catenin/CTNND2, thereby increasing synaptic delivery and surface stabilization of alpha-amino-3-hydroxy-5-methyl-4-isoxazole propionic acid receptors (AMPARs). Under basal conditions, remains at the synaptic membrane through FYN-mediated phosphorylation that prevents association with endocytic proteins. Neuronal activity enhances the internalization and trafficking of DHHC5 from spines to dendritic shafts where it palmitoylates delta-catenin/CTNND2. Regulates cell adhesion at the plasma membrane by palmitoylating GOLGA7B and DSG2. Plays a role in innate immune response by mediating the palmitoylation of NOD1 and NOD2 and their proper recruitment to the bacterial entry site and phagosomes. Also participates in fatty acid uptake by palmitoylating CD36 and thereby targeting it to the plasma membrane. Upon binding of fatty acids to CD36, gets phosphorylated by LYN leading to inactivation and subsequent CD36 caveolar endocytosis. Controls oligodendrocyte development by catalyzing STAT3 palmitoylation. Acts as a regulator of inflammatory response by mediating palmitoylation of NLRP3 and GSDMD. Palmitoylates NLRP3 to promote inflammasome assembly and activation. Activates pyroptosis by catalyzing palmitoylation of gasdermin-D (GSDMD), thereby promoting membrane translocation and pore formation of GSDMD. The sequence is that of Palmitoyltransferase ZDHHC5 (ZDHHC5) from Pan troglodytes (Chimpanzee).